The chain runs to 319 residues: Ribosomal RNA small subunit methyltransferase H (319 aa).

S-adenosyl-L-methionine contacts are provided by residues 37 to 39 (GGH), Asp-56, Leu-90, Asp-104, and Gln-111.

Belongs to the methyltransferase superfamily. RsmH family.

It localises to the cytoplasm. The enzyme catalyses cytidine(1402) in 16S rRNA + S-adenosyl-L-methionine = N(4)-methylcytidine(1402) in 16S rRNA + S-adenosyl-L-homocysteine + H(+). Functionally, specifically methylates the N4 position of cytidine in position 1402 (C1402) of 16S rRNA. The protein is Ribosomal RNA small subunit methyltransferase H of Nocardioides sp. (strain ATCC BAA-499 / JS614).